Consider the following 377-residue polypeptide: 23S rRNA (uracil(747)-C(5))-methyltransferase RlmC (377 aa).

Residues C3, C11, C14, and C87 each contribute to the [4Fe-4S] cluster site. S-adenosyl-L-methionine is bound by residues Q212, F241, E262, and N307. The active-site Nucleophile is the C334.

Belongs to the class I-like SAM-binding methyltransferase superfamily. RNA M5U methyltransferase family. RlmC subfamily.

The enzyme catalyses uridine(747) in 23S rRNA + S-adenosyl-L-methionine = 5-methyluridine(747) in 23S rRNA + S-adenosyl-L-homocysteine + H(+). In terms of biological role, catalyzes the formation of 5-methyl-uridine at position 747 (m5U747) in 23S rRNA. In Xenorhabdus bovienii (strain SS-2004) (Xenorhabdus nematophila subsp. bovienii), this protein is 23S rRNA (uracil(747)-C(5))-methyltransferase RlmC.